The following is a 490-amino-acid chain: 5-hydroxytryptamine receptor 3A (490 aa).

Positions 1–19 are cleaved as a signal peptide; sequence MVLWLQLALLALLLPTSLA. Topologically, residues 20 to 249 are extracellular; it reads QGEVRGKGTA…FYVVIRRRPL (230 aa). N-linked (GlcNAc...) asparagine glycosylation is found at Asn33, Asn109, Asn175, and Asn191. Cys162 and Cys176 form a disulfide bridge. The helical transmembrane segment at 250-270 threads the bilayer; it reads FYAVTLLLPSIFLMIVDIVGF. Topologically, residues 271 to 285 are cytoplasmic; the sequence is YLPPDSGERVSFKIT. A helical transmembrane segment spans residues 286 to 306; sequence LLLGYSVFLIIVSDTLPATAI. The Extracellular segment spans residues 307 to 312; it reads GTPLIS. Residues 313-333 form a helical membrane-spanning segment; it reads VYFVVCMALLVISLAETILIV. At 334–467 the chain is on the cytoplasmic side; sequence RLVHKQDLQQ…GSVLDKLLFR (134 aa). Positions 401 to 422 are disordered; it reads GGPQDLEKTSRGRGSPPPPPRE. The segment at 426-462 is HA-stretch; determines single-channel conductance in 5-HT3 receptors; it reads AMCGLLQELASIRHFLEKREETREVARDWLRVGSVLD. Residues 468–488 traverse the membrane as a helical segment; that stretch reads VYLLAVLAYSITLVTLWSVWH. The Extracellular portion of the chain corresponds to 489–490; that stretch reads YA.

It belongs to the ligand-gated ion channel (TC 1.A.9) family. 5-hydroxytryptamine receptor (TC 1.A.9.2) subfamily. HTR3A sub-subfamily. Forms homopentameric as well as heteropentameric serotonin-activated cation-selective channel complexes with HTR3B or HTR3C or HTR3D or HTR3E. The homomeric complex is functional but exhibits low conductance with modified voltage dependence, and decreased agonist and antagonist affinity. Heteropentameric complexes display properties which resemble that of neuronal serotonin-activated channels in vivo. Interacts with RIC3. As to expression, expressed in cortex, intestine and liver. Not expressed in muscle or spleen.

The protein resides in the postsynaptic cell membrane. The protein localises to the cell membrane. It carries out the reaction Na(+)(in) = Na(+)(out). It catalyses the reaction K(+)(in) = K(+)(out). The enzyme catalyses Ca(2+)(in) = Ca(2+)(out). The catalysed reaction is Mg(2+)(in) = Mg(2+)(out). Functionally, forms serotonin (5-hydroxytryptamine/5-HT3)-activated cation-selective channel complexes, which when activated cause fast, depolarizing responses in neurons. The chain is 5-hydroxytryptamine receptor 3A from Cavia porcellus (Guinea pig).